Reading from the N-terminus, the 255-residue chain is 4-hydroxy-tetrahydrodipicolinate reductase (255 aa).

Residues 8 to 13 (GASGRM), 89 to 91 (GTT), and 114 to 117 (SSNY) each bind NAD(+). His146 (proton donor/acceptor) is an active-site residue. Position 147 (His147) interacts with (S)-2,3,4,5-tetrahydrodipicolinate. The active-site Proton donor is Lys150. Position 156–157 (156–157 (GT)) interacts with (S)-2,3,4,5-tetrahydrodipicolinate.

It belongs to the DapB family.

It is found in the cytoplasm. The enzyme catalyses (S)-2,3,4,5-tetrahydrodipicolinate + NAD(+) + H2O = (2S,4S)-4-hydroxy-2,3,4,5-tetrahydrodipicolinate + NADH + H(+). It catalyses the reaction (S)-2,3,4,5-tetrahydrodipicolinate + NADP(+) + H2O = (2S,4S)-4-hydroxy-2,3,4,5-tetrahydrodipicolinate + NADPH + H(+). It functions in the pathway amino-acid biosynthesis; L-lysine biosynthesis via DAP pathway; (S)-tetrahydrodipicolinate from L-aspartate: step 4/4. In terms of biological role, catalyzes the conversion of 4-hydroxy-tetrahydrodipicolinate (HTPA) to tetrahydrodipicolinate. This is 4-hydroxy-tetrahydrodipicolinate reductase from Methanoregula boonei (strain DSM 21154 / JCM 14090 / 6A8).